Here is a 2400-residue protein sequence, read N- to C-terminus: Retinitis pigmentosa 1-like 1 protein (2400 aa).

2 consecutive Doublecortin domains span residues 34 to 118 (KKIT…GPGR) and 152 to 231 (RRIL…PAMK). Disordered regions lie at residues 104-152 (CSDK…KTPR), 230-310 (MKNA…DDMK), 444-1064 (GRER…DREA), 1188-1251 (AMTE…GDLE), 1275-1501 (EAER…GAAE), and 1697-2400 (RGEH…DLDF). Over residues 242-251 (SGLTSRNKNG) the composition is skewed to polar residues. Pro residues predominate over residues 277-287 (RPGPSNPPVGP). A compositionally biased stretch (polar residues) spans 450 to 460 (QDSASPASSTG). Composition is skewed to low complexity over residues 530–543 (GASSDSSASTGSHE) and 573–584 (DPASPALSLSSL). The span at 591-601 (AETQGQGTEQA) shows a compositional bias: polar residues. Composition is skewed to low complexity over residues 625 to 637 (SSTPSTCTSSQQG) and 645 to 654 (ASAMSSPSSP). Positions 661 to 670 (PRGHPRHSHY) are enriched in basic residues. 2 stretches are compositionally biased toward polar residues: residues 711-740 (TRTQASGNLRPPSSGSLPSQDLLGTSSATV) and 825-835 (CCSQPGTQPAQ). Composition is skewed to low complexity over residues 864 to 880 (QRRSSSCGSTGSSHQST), 903 to 921 (PNSGASRRSSASQGAGSRG), and 941 to 953 (SGVSPSSLPRSSP). 2 stretches are compositionally biased toward polar residues: residues 1223 to 1238 (LVTQGTELPLKTSNQR) and 1285 to 1299 (ASSNLEQLAENTVQE). Residues 1292–1307 (LAENTVQEEVQLEETK) form a 1-1; approximate repeat. Residues 1292-1342 (LAENTVQEEVQLEETKEGTEGEGLQEEAVQLEETKTEEGLQEEGVQLEETK) are 3 X 16 AA approximate tandem repeats of T-E-E-G-L-Q-E-E-G-V-Q-L-E-E-T-K. Residues 1310 to 1326 (TEGEGLQEEAVQLEETK) form a 1-2; approximate repeat. A 1-3 repeat occupies 1327-1342 (TEEGLQEEGVQLEETK). Residues 1346–1363 (GEGQQEEEAQLEEIEETG) show a composition bias toward acidic residues. Low complexity predominate over residues 1434–1445 (RASASAEPCPAE). Polar residues-rich tracts occupy residues 1460–1472 (TDPSASERQSGSQ) and 1489–1501 (EHTQAQPTQGAAE). Residues 1726–1736 (AEGGLGPGLSQ) show a composition bias toward gly residues. 2 stretches are compositionally biased toward basic and acidic residues: residues 1752–1762 (LNRDKDPKLGE) and 1769–1778 (AQEREGKTHN). 3 consecutive repeat copies span residues 1836-1851 (EAPEAEGEAQPESEGV), 1852-1867 (EAPEAEGDAQEAEGEA), and 1875-1890 (EAPEAEGEAQPESEDV). 2 stretches are compositionally biased toward acidic residues: residues 1836 to 1909 (EAPE…AEAP) and 1920 to 1948 (ESVEALETEGEDEPESEGAEAQEAEEAAQ). The interval 1836-2244 (EAPEAEGEAQ…GEAQPESEGE (409 aa)) is 25 X 16 AA approximate tandem repeats of [ED]-[AT]-[PQ]-[ED]-[AVT]-E-[GKE]-[ED]-[AMT]-Q-[EPK]-[EAT]-[TSELP]-[EG]-[EGSQDI]-[AVIE]. A 2-4; approximate repeat occupies 1891–1906 (ETPEAEWEVQPESEGA). A 2-5 repeat occupies 1907 to 1921 (EAPEAEKEAQPETES). The stretch at 1923-1938 (EALETEGEDEPESEGA) is one 2-6; approximate repeat. The stretch at 1934-2017 (ESEGAEAQEA…EMQEAEEEAQ (84 aa)) forms a coiled coil. Residues 1939–1954 (EAQEAEEAAQEAEGQT) form a 2-7 repeat. A compositionally biased stretch (low complexity) spans 1949 to 1958 (EAEGQTQPES). The stretch at 1955–1970 (QPESEVIESQEAEEEA) is one 2-8; approximate repeat. Composition is skewed to acidic residues over residues 1959–2022 (EVIE…ESDG), 2048–2075 (AQPESDGVEAPEAEEEAQEAEGEVQEAE), 2083–2108 (EDVDAQEAEGEAQPESEGVEAPEAEG), and 2117–2245 (EAPE…EGET). The stretch at 1971–1984 (QPESEDVEALEVEV) is one 2-9; approximate repeat. 2 repeat units span residues 1985–2000 (ETQEAEGEAQPESEDV) and 2001–2016 (EAPEAEGEMQEAEEEA). One copy of the 2-12; approximate repeat lies at 2017 to 2031 (QPESDGVEAQPKSEG). Residues 2033 to 2048 (EAQEVEGETQKTEGDA) form a 2-13d repeat. Residues 2054–2081 (GVEAPEAEEEAQEAEGEVQEAEGEAHPE) adopt a coiled-coil conformation. The 2-14 repeat unit spans residues 2056–2071 (EAPEAEEEAQEAEGEV). A 2-15; approximate repeat occupies 2072-2085 (QEAEGEAHPESEDV). Tandem repeats lie at residues 2086–2101 (DAQEAEGEAQPESEGV), 2102–2116 (EAPEAEGEAQKAEGI), 2117–2132 (EAPETEGEAQPESEGI), 2133–2148 (EAPEAEGEAQPESEGV), 2149–2164 (EAQDAEGEAQPESEGI), 2165–2180 (EAQEAEEEAQPELEGV), 2181–2196 (EAPEAEGEAQPESEGI), 2197–2212 (EAPEAEGEAQPELEGV), 2213–2228 (EAPEAEEEAQPEPEGV), and 2229–2244 (ETPEAEGEAQPESEGE). A compositionally biased stretch (polar residues) spans 2292–2308 (PGSQTGPSSSRASSWGN). The span at 2312 to 2327 (KDSENDHVLGDTRSPD) shows a compositional bias: basic and acidic residues.

As to quaternary structure, interacts with RP1; has a synergistic effect with RP1 in photoreceptor differentiation. In terms of tissue distribution, retinal-specific; expressed in photoreceptor.

Its subcellular location is the cytoplasm. The protein resides in the cytoskeleton. It localises to the cilium axoneme. It is found in the cell projection. The protein localises to the cilium. Its subcellular location is the photoreceptor outer segment. Required for the differentiation of photoreceptor cells. Plays a role in the organization of outer segment of rod and cone photoreceptors. The protein is Retinitis pigmentosa 1-like 1 protein (RP1L1) of Homo sapiens (Human).